Reading from the N-terminus, the 488-residue chain is Glycogen synthase (488 aa).

Arg-20 contacts ADP-alpha-D-glucose.

It belongs to the glycosyltransferase 1 family. Bacterial/plant glycogen synthase subfamily.

It carries out the reaction [(1-&gt;4)-alpha-D-glucosyl](n) + ADP-alpha-D-glucose = [(1-&gt;4)-alpha-D-glucosyl](n+1) + ADP + H(+). The protein operates within glycan biosynthesis; glycogen biosynthesis. Synthesizes alpha-1,4-glucan chains using ADP-glucose. The chain is Glycogen synthase from Chlorobaculum tepidum (strain ATCC 49652 / DSM 12025 / NBRC 103806 / TLS) (Chlorobium tepidum).